Reading from the N-terminus, the 125-residue chain is Small ribosomal subunit protein eS8 (125 aa).

Residues 1–36 form a disordered region; it reads MKDQGRSTRKRTGGRLHDVSKKKRHQLGREPAETTV. A compositionally biased stretch (basic residues) spans 7 to 26; that stretch reads STRKRTGGRLHDVSKKKRHQ. Basic and acidic residues predominate over residues 27–36; it reads LGREPAETTV.

Belongs to the eukaryotic ribosomal protein eS8 family. Part of the 30S ribosomal subunit.

In Haloquadratum walsbyi (strain DSM 16790 / HBSQ001), this protein is Small ribosomal subunit protein eS8.